A 127-amino-acid chain; its full sequence is Holo-[acyl-carrier-protein] synthase (127 aa).

The Mg(2+) site is built by D8 and E59.

The protein belongs to the P-Pant transferase superfamily. AcpS family. Requires Mg(2+) as cofactor.

The protein localises to the cytoplasm. The catalysed reaction is apo-[ACP] + CoA = holo-[ACP] + adenosine 3',5'-bisphosphate + H(+). In terms of biological role, transfers the 4'-phosphopantetheine moiety from coenzyme A to a Ser of acyl-carrier-protein. The polypeptide is Holo-[acyl-carrier-protein] synthase (Rickettsia bellii (strain OSU 85-389)).